Reading from the N-terminus, the 107-residue chain is C-X-C motif chemokine 2 (107 aa).

A signal peptide spans 1–34; that stretch reads MARATLSAAPSNPRLLRVALLLLLLVAASRRAAG. Cystine bridges form between Cys43–Cys69 and Cys45–Cys85.

This sequence belongs to the intercrine alpha (chemokine CxC) family. The N-terminal processed form GRO-beta(5-73) is produced by proteolytic cleavage after secretion from bone marrow stromal cells.

It is found in the secreted. Produced by activated monocytes and neutrophils and expressed at sites of inflammation. Hematoregulatory chemokine, which, in vitro, suppresses hematopoietic progenitor cell proliferation. GRO-beta(5-73) shows a highly enhanced hematopoietic activity. This chain is C-X-C motif chemokine 2 (CXCL2), found in Homo sapiens (Human).